A 154-amino-acid chain; its full sequence is MHALVQLRGEVNMHTDIQDTLEMLNIHHVNHCTLVPETDAYRGMVAKVNDFVAFGEPSQETLETVLATRAEPLEGDADVDDEWVAEHTDYDDISGLAFALLSEETTLREQGLSPTLRLHPPRGGHDGVKHPVKEGGQLGKHDTEGIDDLLEAMR.

The segment at 114-146 is disordered; it reads PTLRLHPPRGGHDGVKHPVKEGGQLGKHDTEGI. Basic and acidic residues predominate over residues 123 to 144; it reads GGHDGVKHPVKEGGQLGKHDTE.

Belongs to the universal ribosomal protein uL30 family. In terms of assembly, part of the 50S ribosomal subunit. Binds 5S rRNA.

Its function is as follows. This is one of 5 proteins that mediate the attachment of the 5S rRNA onto the large ribosomal subunit, stabilizing the orientation of adjacent RNA domains. The polypeptide is Large ribosomal subunit protein uL30 (Haloarcula marismortui (strain ATCC 43049 / DSM 3752 / JCM 8966 / VKM B-1809) (Halobacterium marismortui)).